A 417-amino-acid chain; its full sequence is Serine hydroxymethyltransferase (417 aa).

(6S)-5,6,7,8-tetrahydrofolate contacts are provided by residues Leu121 and 125-127 (GHL). The residue at position 230 (Lys230) is an N6-(pyridoxal phosphate)lysine. 355–357 (SPF) is a binding site for (6S)-5,6,7,8-tetrahydrofolate.

The protein belongs to the SHMT family. In terms of assembly, homodimer. Pyridoxal 5'-phosphate is required as a cofactor.

The protein resides in the cytoplasm. The enzyme catalyses (6R)-5,10-methylene-5,6,7,8-tetrahydrofolate + glycine + H2O = (6S)-5,6,7,8-tetrahydrofolate + L-serine. It functions in the pathway one-carbon metabolism; tetrahydrofolate interconversion. Its pathway is amino-acid biosynthesis; glycine biosynthesis; glycine from L-serine: step 1/1. Its function is as follows. Catalyzes the reversible interconversion of serine and glycine with tetrahydrofolate (THF) serving as the one-carbon carrier. This reaction serves as the major source of one-carbon groups required for the biosynthesis of purines, thymidylate, methionine, and other important biomolecules. Also exhibits THF-independent aldolase activity toward beta-hydroxyamino acids, producing glycine and aldehydes, via a retro-aldol mechanism. The polypeptide is Serine hydroxymethyltransferase (Ruthia magnifica subsp. Calyptogena magnifica).